We begin with the raw amino-acid sequence, 189 residues long: Potassium-transporting ATPase KdpC subunit (189 aa).

A helical transmembrane segment spans residues 8-28 (LVMLILLTLITGIAYPLLTTG).

Belongs to the KdpC family. The system is composed of three essential subunits: KdpA, KdpB and KdpC.

It is found in the cell inner membrane. Functionally, part of the high-affinity ATP-driven potassium transport (or Kdp) system, which catalyzes the hydrolysis of ATP coupled with the electrogenic transport of potassium into the cytoplasm. This subunit acts as a catalytic chaperone that increases the ATP-binding affinity of the ATP-hydrolyzing subunit KdpB by the formation of a transient KdpB/KdpC/ATP ternary complex. The polypeptide is Potassium-transporting ATPase KdpC subunit (Serratia proteamaculans (strain 568)).